The primary structure comprises 90 residues: ATP-dependent Clp protease adapter protein ClpS (90 aa).

It belongs to the ClpS family. As to quaternary structure, binds to the N-terminal domain of the chaperone ClpA.

Involved in the modulation of the specificity of the ClpAP-mediated ATP-dependent protein degradation. The polypeptide is ATP-dependent Clp protease adapter protein ClpS (Helicobacter pylori (strain J99 / ATCC 700824) (Campylobacter pylori J99)).